Reading from the N-terminus, the 721-residue chain is MNMISYALLGVILGISGVIYAVYLAVWVLRQDPGNEKMRFISQAIATGARAYLFRQYRTLAVLLVILAVLILVAIDMPRRTFGLTALAFIVGALGSMLAGYLGMYVTTRSASRVAQAAATGGMGKALLVSWRAGAVMGLSLASIALLLISGFYLVFRSVLPDDWAVPLVALGFGASLVTLFMRVGGGIYTKAADLGADLVGKVEAGIPEDDPRNPGVIADNVGDNVGDVAGMAADVYESYIVTVTAAIFLAAILGLPTQFIEAIILFAALALVATFAGVNLLKTTGVKHPLSSISLAIYATIGLSVVLFFIGAFTLGLDSTKALALAATTSLGAVIAPLIVKITDYYTSYNYGPVRKIAEQAKISPATVIITGYGVGLMSAIPVIAVIVAVLGISYMIGYYTVPVSGFGELSKYLAGIFGTAMASVGLLVVAGIIITADSYGPVSDNAGGVVEMAGLPDEVREITDVLDSVGNTTKATTKGYAIASAALAALVLFIALIFEIVYSASKILGKGIVDMISESLSGLQLINANVLIGAFLGVALVYFFSSRTLEAVGRTAMEIVEEIRRQFREKPGILEWKEQPDYARVVDIATRRALGEFLIPGLAAIVLPLITGLLLGWNALAGLIMGAIVAGVPRALLMANAGGAWDNAKKYIEIQGLKKTEMHKAAVIGDTVGDPMKDTVGPSLNPLIKVLNTLSVVFTYVIVSTNIALGIWPSGLLPF.

5 helical membrane passes run leucine 8 to valine 28, tyrosine 57 to methionine 77, phenylalanine 82 to leucine 102, valine 136 to phenylalanine 156, and leucine 168 to isoleucine 188. Lysine 191 is a substrate binding site. Residues aspartate 194, aspartate 198, asparagine 221, and aspartate 224 each contribute to the Mg(2+) site. The next 5 membrane-spanning stretches (helical) occupy residues alanine 247–phenylalanine 267, isoleucine 294–phenylalanine 314, alanine 323–isoleucine 343, tyrosine 374–isoleucine 394, and alanine 416–isoleucine 436. Residue aspartate 446 coordinates Mg(2+). 4 helical membrane-spanning segments follow: residues alanine 483 to valine 503, leucine 527 to serine 547, phenylalanine 599 to tryptophan 619, and alanine 621 to alanine 641. 3 residues coordinate Ca(2+): aspartate 648, aspartate 672, and aspartate 676. A substrate-binding site is contributed by lysine 679. The chain crosses the membrane as a helical span at residues valine 698–leucine 718.

This sequence belongs to the H(+)-translocating pyrophosphatase (TC 3.A.10) family. K(+)-insensitive subfamily. As to quaternary structure, homodimer. The cofactor is Mg(2+).

Its subcellular location is the cell membrane. The enzyme catalyses diphosphate + H2O + H(+)(in) = 2 phosphate + 2 H(+)(out). In terms of biological role, proton pump that utilizes the energy of pyrophosphate hydrolysis as the driving force for proton movement across the membrane. Generates a proton motive force. The protein is K(+)-insensitive pyrophosphate-energized proton pump of Pyrobaculum aerophilum (strain ATCC 51768 / DSM 7523 / JCM 9630 / CIP 104966 / NBRC 100827 / IM2).